Here is a 212-residue protein sequence, read N- to C-terminus: Interleukin-6 (212 aa).

The first 29 residues, 1 to 29 (MNSFSTSAFGPVAFSLGLLLVLPAAFPAP), serve as a signal peptide directing secretion. Cysteine 72 and cysteine 78 are joined by a disulfide. Residue asparagine 73 is glycosylated (N-linked (GlcNAc...) asparagine). Residue serine 81 is modified to Phosphoserine; by FAM20C. Cysteine 101 and cysteine 111 are oxidised to a cystine.

It belongs to the IL-6 superfamily. As to quaternary structure, component of a hexamer of two molecules each of IL6, IL6R and IL6ST; first binds to IL6R to associate with the signaling subunit IL6ST. Interacts with IL6R (via the N-terminal ectodomain); this interaction may be affected by IL6R-binding with SORL1, hence decreasing IL6 cis signaling. Interacts with SORL1 (via the N-terminal ectodomain); this interaction leads to IL6 internalization and lysosomal degradation. May form a trimeric complex with the soluble SORL1 ectodomain and soluble IL6R receptor; this interaction might stabilize circulating IL6, hence promoting IL6 trans signaling. Post-translationally, N- and O-glycosylated. Produced by skeletal muscle.

Its subcellular location is the secreted. In terms of biological role, cytokine with a wide variety of biological functions in immunity, tissue regeneration, and metabolism. Binds to IL6R, then the complex associates to the signaling subunit IL6ST/gp130 to trigger the intracellular IL6-signaling pathway. The interaction with the membrane-bound IL6R and IL6ST stimulates 'classic signaling', whereas the binding of IL6 and soluble IL6R to IL6ST stimulates 'trans-signaling'. Alternatively, 'cluster signaling' occurs when membrane-bound IL6:IL6R complexes on transmitter cells activate IL6ST receptors on neighboring receiver cells. Its function is as follows. IL6 is a potent inducer of the acute phase response. Rapid production of IL6 contributes to host defense during infection and tissue injury, but excessive IL6 synthesis is involved in disease pathology. In the innate immune response, is synthesized by myeloid cells, such as macrophages and dendritic cells, upon recognition of pathogens through toll-like receptors (TLRs) at the site of infection or tissue injury. In the adaptive immune response, is required for the differentiation of B cells into immunoglobulin-secreting cells. Plays a major role in the differentiation of CD4(+) T cell subsets. Essential factor for the development of T follicular helper (Tfh) cells that are required for the induction of germinal-center formation. Required to drive naive CD4(+) T cells to the Th17 lineage. Also required for proliferation of myeloma cells and the survival of plasmablast cells. Functionally, acts as an essential factor in bone homeostasis and on vessels directly or indirectly by induction of VEGF, resulting in increased angiogenesis activity and vascular permeability. Induces, through 'trans-signaling' and synergistically with IL1B and TNF, the production of VEGF. Involved in metabolic controls, is discharged into the bloodstream after muscle contraction increasing lipolysis and improving insulin resistance. 'Trans-signaling' in central nervous system also regulates energy and glucose homeostasis. Mediates, through GLP-1, crosstalk between insulin-sensitive tissues, intestinal L cells and pancreatic islets to adapt to changes in insulin demand. Also acts as a myokine. Plays a protective role during liver injury, being required for maintenance of tissue regeneration. Also has a pivotal role in iron metabolism by regulating HAMP/hepcidin expression upon inflammation or bacterial infection. Through activation of IL6ST-YAP-NOTCH pathway, induces inflammation-induced epithelial regeneration. The sequence is that of Interleukin-6 from Homo sapiens (Human).